Reading from the N-terminus, the 472-residue chain is UDP-N-acetylmuramate--L-alanine ligase (472 aa).

Residue 122–128 (GSHGKTT) participates in ATP binding.

Belongs to the MurCDEF family.

Its subcellular location is the cytoplasm. The catalysed reaction is UDP-N-acetyl-alpha-D-muramate + L-alanine + ATP = UDP-N-acetyl-alpha-D-muramoyl-L-alanine + ADP + phosphate + H(+). The protein operates within cell wall biogenesis; peptidoglycan biosynthesis. Its function is as follows. Cell wall formation. This Prochlorococcus marinus (strain SARG / CCMP1375 / SS120) protein is UDP-N-acetylmuramate--L-alanine ligase.